Consider the following 431-residue polypeptide: Metal-binding activator 1 (431 aa).

A DNA-binding region (copper-fist) is located at residues 1 to 40 (MILIDDIKYACMECVRGHRSSSCKHHERPLLQVRSKGRPG). Zn(2+)-binding residues include C11, C14, C23, and H25.

Its subcellular location is the nucleus. Functionally, copper ion-sensing transcription factor which activates transcription of the CTR1 copper transporter under low-copper conditions. Promotes filamentous and invasive growth. This is Metal-binding activator 1 (MAC1) from Candida albicans (strain SC5314 / ATCC MYA-2876) (Yeast).